The primary structure comprises 857 residues: Leucine--tRNA ligase (857 aa).

A 'HIGH' region motif is present at residues 42-52 (PYPSGRLHMGH). The short motif at 617–621 (KMSKS) is the 'KMSKS' region element. An ATP-binding site is contributed by Lys-620.

The protein belongs to the class-I aminoacyl-tRNA synthetase family.

Its subcellular location is the cytoplasm. The enzyme catalyses tRNA(Leu) + L-leucine + ATP = L-leucyl-tRNA(Leu) + AMP + diphosphate. This chain is Leucine--tRNA ligase, found in Vibrio vulnificus (strain CMCP6).